The chain runs to 587 residues: Pentatricopeptide repeat-containing protein OGR1, mitochondrial (587 aa).

Residues 1 to 30 (MSVSAAARHLESLLPRLASLRHYLQFHARL) constitute a mitochondrion transit peptide. PPR repeat units follow at residues 145 to 179 (DVRLLTTLLDSYAKCGDLASARKVFDEMTVRDVAT), 200 to 203 (FHRL), 217 to 251 (NEVTIVAALSACAQIGLLKDGMYVHEFAKRFGLDR), 252 to 286 (NVRVCNSLIDMYSKCGSLSRALDVFHSIKPEDQTL), 287 to 315 (VSYNAAIQAHSMHGHGGDALRLFDEMPTR), 319 to 349 (DGVTYLAVLCGCNHSGLVDDGLRVFNSMRVA), 351 to 381 (NMKHYGTIVDLLGRAGRLTEAYDTVISMPFP), and 383 to 417 (DIVLWQTLLGAAKMHGVVELAELAANKLAELGSNV). Residues 386–461 (LWQTLLGAAK…VPGFSYTEID (76 aa)) form a type E motif region. A type E(+) motif region spans residues 462–492 (GVMHKFINGDKEHPRWQEIYRALEDIVSRIS). The tract at residues 493–587 (ELGYEPETSN…DGQCSCRDYW (95 aa)) is type DYW motif.

Its subcellular location is the mitochondrion. Its function is as follows. Involved in multiple sites RNA editing events in mitochondria. Essential for C-to-U RNA editing at seven specific sites of nad2, nad4, cox2, cox3 and ccmC transcripts, all coding for proteins involved in the mitochondrial electron transport chain coupled to ATP generation. Required for normal growth and development. The protein is Pentatricopeptide repeat-containing protein OGR1, mitochondrial of Oryza sativa subsp. japonica (Rice).